Reading from the N-terminus, the 338-residue chain is MTCILGIETSCDDTCVAVYDTNNGVIFNQVYSQSQLYNYYGGIVPEFSARKHLEILIVLLKNIFKKGKISKNLIDAVAYTAGPGLVGSLLVGASVGTALAYSLKVPVVLVNHMEAHLLTPMLENIKPTFPFLALLVSGGHTQLINALGIGEYELLGETLDDAVGEAFDKVAQALGLGYPGGSNLSKLARSGIPGTFNFPRPMINNSNLNFSFSGLKTFVLNIIQKNNNDFQIKANIAREFENAVVDSLVIKCIRALKKLKYTTLVVSGGVSKNDVLRMHINRIIKQYNYKVFYSHLKYCSDNAAMIAYVGSIRYKKFKSLNLEIKINPNWSIVDLAKI.

Fe cation contacts are provided by His112 and His116. Residues 135–139 (LVSGG), Asp168, Gly181, and Asn273 each bind substrate. A Fe cation-binding site is contributed by Asp301.

This sequence belongs to the KAE1 / TsaD family. Requires Fe(2+) as cofactor.

It localises to the cytoplasm. The enzyme catalyses L-threonylcarbamoyladenylate + adenosine(37) in tRNA = N(6)-L-threonylcarbamoyladenosine(37) in tRNA + AMP + H(+). Required for the formation of a threonylcarbamoyl group on adenosine at position 37 (t(6)A37) in tRNAs that read codons beginning with adenine. Is involved in the transfer of the threonylcarbamoyl moiety of threonylcarbamoyl-AMP (TC-AMP) to the N6 group of A37, together with TsaE and TsaB. TsaD likely plays a direct catalytic role in this reaction. This is tRNA N6-adenosine threonylcarbamoyltransferase from Buchnera aphidicola subsp. Baizongia pistaciae (strain Bp).